The chain runs to 167 residues: Putative NADH-quinone oxidoreductase subunit B 2 (167 aa).

This sequence belongs to the complex I 20 kDa subunit family. As to quaternary structure, NDH-1 is composed of 14 different subunits. Subunits NuoB, C, D, E, F, and G constitute the peripheral sector of the complex.

Its subcellular location is the cell inner membrane. The catalysed reaction is a quinone + NADH + 5 H(+)(in) = a quinol + NAD(+) + 4 H(+)(out). In terms of biological role, NDH-1 shuttles electrons from NADH, via FMN and iron-sulfur (Fe-S) centers, to quinones in the respiratory chain. Couples the redox reaction to proton translocation (for every two electrons transferred, four hydrogen ions are translocated across the cytoplasmic membrane), and thus conserves the redox energy in a proton gradient. In Burkholderia pseudomallei (strain 1710b), this protein is Putative NADH-quinone oxidoreductase subunit B 2.